A 263-amino-acid chain; its full sequence is Hydroxyacylglutathione hydrolase (263 aa).

H55, H57, D59, H60, H117, D134, and H172 together coordinate Zn(2+).

Belongs to the metallo-beta-lactamase superfamily. Glyoxalase II family. As to quaternary structure, monomer. The cofactor is Zn(2+).

The enzyme catalyses an S-(2-hydroxyacyl)glutathione + H2O = a 2-hydroxy carboxylate + glutathione + H(+). The protein operates within secondary metabolite metabolism; methylglyoxal degradation; (R)-lactate from methylglyoxal: step 2/2. In terms of biological role, thiolesterase that catalyzes the hydrolysis of S-D-lactoyl-glutathione to form glutathione and D-lactic acid. This is Hydroxyacylglutathione hydrolase from Shewanella baltica (strain OS223).